A 231-amino-acid polypeptide reads, in one-letter code: Triggering receptor expressed on myeloid cells 1 (231 aa).

The first 20 residues, 1-20, serve as a signal peptide directing secretion; it reads MRKTRLWGLLWMFFVSELLA. Topologically, residues 21-202 are extracellular; sequence ATKLTEEKYE…TDIIRVPVFN (182 aa). Positions 26–131 constitute an Ig-like V-type domain; it reads EEKYELKEGQ…LFDRIRLVVT (106 aa). Cys41 and Cys110 are joined by a disulfide. Composition is skewed to polar residues over residues 134 to 157 and 164 to 182; these read SSGTPGSSENSTPNVYKTPPTTTK and TSPTTVTQAPPKSTADVST. Positions 134 to 182 are disordered; it reads SSGTPGSSENSTPNVYKTPPTTTKALRPLYTSPTTVTQAPPKSTADVST. Residues Asn188 and Asn191 are each glycosylated (N-linked (GlcNAc...) asparagine). Residues 203–223 traverse the membrane as a helical segment; it reads IAILVAGGFLSKSLVFSVLFA. Residues 224–231 lie on the Cytoplasmic side of the membrane; the sequence is VTLRSFVP.

As to quaternary structure, monomer. Homomultimer; when activated. Interacts with TYROBP/DAP12. Interacts with TLR4.

Its subcellular location is the cell membrane. Its function is as follows. Cell surface receptor that plays important roles in innate and adaptive immunity by amplifying inflammatory responses. Upon activation by various ligands such as PGLYRP1, HMGB1 or HSP70, multimerizes and forms a complex with transmembrane adapter TYROBP/DAP12. In turn, initiates a SYK-mediated cascade of tyrosine phosphorylation, activating multiple downstream mediators such as BTK, MAPK1, MAPK3 or phospholipase C-gamma. This cascade promotes the neutrophil- and macrophage-mediated release of pro-inflammatory cytokines and/or chemokines, as well as their migration and thereby amplifies inflammatory responses that are triggered by bacterial and fungal infections. By also promoting the amplification of inflammatory signals that are initially triggered by Toll-like receptor (TLR) and NOD-like receptor engagement, plays a major role in the pathophysiology of acute and chronic inflammatory diseases of different etiologies including septic shock and atherosclerosis. This Pongo abelii (Sumatran orangutan) protein is Triggering receptor expressed on myeloid cells 1 (TREM1).